A 313-amino-acid chain; its full sequence is Serine/threonine-protein kinase SZE1 (313 aa).

Residue glycine 2 is the site of N-myristoyl glycine attachment. The region spanning 43–311 (MELGESLGYI…EVLDNLNAIA (269 aa)) is the Protein kinase domain. ATP-binding positions include 49 to 57 (LGYINPKTL) and lysine 71.

Belongs to the protein kinase superfamily. Ser/Thr protein kinase family. In terms of assembly, component of an immune signaling complex made of, at least, SZE1, BKN2/SZE2, ZAR1 and ZED1. Interacts directly with ZED1, ZAR1 and Pseudomonas syringae HOPZ1A at the plasma membrane. In terms of processing, N-terminal myristoylation is critical for plasma membrane localization and implication in defense responses. Post-translationally, autophosphorylated. In terms of tissue distribution, expressed in roots, seedlings, rosette leaves, floral organs, siliques and inflorescence stems.

The protein resides in the cell membrane. It carries out the reaction L-seryl-[protein] + ATP = O-phospho-L-seryl-[protein] + ADP + H(+). The catalysed reaction is L-threonyl-[protein] + ATP = O-phospho-L-threonyl-[protein] + ADP + H(+). Its function is as follows. Together with BKN2/SZE2 and ZED1, required for effector-triggered immunity (e.g. Pseudomonas syringae effector type III HopZ1a) via the activation of ZAR1, thus being essential for resistance against P.syringae pv. tomato DC3000 expressing HopZ1a. This chain is Serine/threonine-protein kinase SZE1, found in Arabidopsis thaliana (Mouse-ear cress).